A 304-amino-acid chain; its full sequence is ATP synthase gamma chain (304 aa).

The protein belongs to the ATPase gamma chain family. F-type ATPases have 2 components, CF(1) - the catalytic core - and CF(0) - the membrane proton channel. CF(1) has five subunits: alpha(3), beta(3), gamma(1), delta(1), epsilon(1). CF(0) has three main subunits: a, b and c.

Its subcellular location is the cell membrane. Produces ATP from ADP in the presence of a proton gradient across the membrane. The gamma chain is believed to be important in regulating ATPase activity and the flow of protons through the CF(0) complex. This is ATP synthase gamma chain from Chloroherpeton thalassium (strain ATCC 35110 / GB-78).